We begin with the raw amino-acid sequence, 121 residues long: NADH-ubiquinone oxidoreductase chain 3 (121 aa).

Helical transmembrane passes span 11-31 (ILIF…LSYF), 63-83 (FYLV…LFPW), and 90-110 (ISII…IGFI).

This sequence belongs to the complex I subunit 3 family.

The protein localises to the mitochondrion membrane. The catalysed reaction is a ubiquinone + NADH + 5 H(+)(in) = a ubiquinol + NAD(+) + 4 H(+)(out). Its function is as follows. Core subunit of the mitochondrial membrane respiratory chain NADH dehydrogenase (Complex I) that is believed to belong to the minimal assembly required for catalysis. Complex I functions in the transfer of electrons from NADH to the respiratory chain. The immediate electron acceptor for the enzyme is believed to be ubiquinone. The protein is NADH-ubiquinone oxidoreductase chain 3 (ND3) of Chondrus crispus (Carrageen Irish moss).